Here is a 1000-residue protein sequence, read N- to C-terminus: SEC23-interacting protein (1000 aa).

The segment at 1-367 is interaction with SEC23A; that stretch reads MAERKPNGGS…YTEEFSEKLE (367 aa). The disordered stretch occupies residues 133 to 252; that stretch reads FSPSISKAQP…QQVPARPGAP (120 aa). The span at 154 to 167 shows a compositional bias: low complexity; that stretch reads SYLPSQPSSLPPSY. Pro residues predominate over residues 207–218; the sequence is PGPPAHPPPSGP. Positions 235 to 246 are enriched in low complexity; that stretch reads SSVQSPAQQQVP. In terms of domain architecture, SAM spans 644 to 707; it reads KEVLTLQETL…NFVEHKAAKL (64 aa). The segment at 716–748 is disordered; the sequence is AVAATSTKGQEQSAQKTKDMASLPSESNEPKRK. Phosphoserine is present on residues serine 737 and serine 926. In terms of domain architecture, DDHD spans 779-989; it reads LDFEPEIFFA…ALLLLKEIYR (211 aa).

It belongs to the PA-PLA1 family. Interacts with SEC23A. In terms of tissue distribution, ubiquitously expressed with stronger levels detected in heart, liver and skeletal muscle.

The protein resides in the cytoplasmic vesicle. The protein localises to the COPII-coated vesicle membrane. Its subcellular location is the endoplasmic reticulum. Plays a role in the organization of endoplasmic reticulum exit sites. Specifically binds to phosphatidylinositol 3-phosphate (PI(3)P), phosphatidylinositol 4-phosphate (PI(4)P) and phosphatidylinositol 5-phosphate (PI(5)P). This Homo sapiens (Human) protein is SEC23-interacting protein (SEC23IP).